Here is a 417-residue protein sequence, read N- to C-terminus: Gamma-glutamyl phosphate reductase (417 aa).

Belongs to the gamma-glutamyl phosphate reductase family.

Its subcellular location is the cytoplasm. The enzyme catalyses L-glutamate 5-semialdehyde + phosphate + NADP(+) = L-glutamyl 5-phosphate + NADPH + H(+). Its pathway is amino-acid biosynthesis; L-proline biosynthesis; L-glutamate 5-semialdehyde from L-glutamate: step 2/2. Functionally, catalyzes the NADPH-dependent reduction of L-glutamate 5-phosphate into L-glutamate 5-semialdehyde and phosphate. The product spontaneously undergoes cyclization to form 1-pyrroline-5-carboxylate. This Erwinia tasmaniensis (strain DSM 17950 / CFBP 7177 / CIP 109463 / NCPPB 4357 / Et1/99) protein is Gamma-glutamyl phosphate reductase.